Here is a 101-residue protein sequence, read N- to C-terminus: Small ribosomal subunit protein uS14A (101 aa).

Residues Ala-47–Leu-66 are disordered.

This sequence belongs to the universal ribosomal protein uS14 family. In terms of assembly, part of the 30S ribosomal subunit. Contacts proteins S3 and S10.

Functionally, binds 16S rRNA, required for the assembly of 30S particles and may also be responsible for determining the conformation of the 16S rRNA at the A site. The protein is Small ribosomal subunit protein uS14A of Myxococcus xanthus (strain DK1622).